A 122-amino-acid polypeptide reads, in one-letter code: Large ribosomal subunit protein uL14 (122 aa).

Belongs to the universal ribosomal protein uL14 family. In terms of assembly, part of the 50S ribosomal subunit. Forms a cluster with proteins L3 and L19. In the 70S ribosome, L14 and L19 interact and together make contacts with the 16S rRNA in bridges B5 and B8.

Its function is as follows. Binds to 23S rRNA. Forms part of two intersubunit bridges in the 70S ribosome. This Paramagnetospirillum magneticum (strain ATCC 700264 / AMB-1) (Magnetospirillum magneticum) protein is Large ribosomal subunit protein uL14.